Here is a 129-residue protein sequence, read N- to C-terminus: Glycine cleavage system H protein (129 aa).

Residues threonine 24–lysine 106 form the Lipoyl-binding domain. At lysine 65 the chain carries N6-lipoyllysine.

Belongs to the GcvH family. As to quaternary structure, the glycine cleavage system is composed of four proteins: P, T, L and H. (R)-lipoate is required as a cofactor.

In terms of biological role, the glycine cleavage system catalyzes the degradation of glycine. The H protein shuttles the methylamine group of glycine from the P protein to the T protein. The protein is Glycine cleavage system H protein of Salmonella choleraesuis (strain SC-B67).